Consider the following 280-residue polypeptide: MLSNFEQLIFVGGVPRSGTTLMRAILDAHPDVRCGGETMLLPSFLTWQAGWRTDWVNNSGITQEVFDDAVSAFITEIIAKHGELAPRLCNKDPYTALWLPTIQRLYPNSKFILMIRDARAVIHSMIERKVPVAGYNTSDEQSMFVKWNQEIRKMLFQCNNAPGQCIKVYYERLIQKPEEEIQRITNFLDLQYSQQMLHHHELIGAEVDLNDQEFSASQVKNSINTKALTSWFDCFSEDTLRKLDDVAPFLSVLGYDTSSSKPDYSMFADDDFYQFRNFYS.

16–20 contributes to the 3'-phosphoadenylyl sulfate binding site; that stretch reads RSGTT. Cysteines 34 and 89 form a disulfide. Catalysis depends on E37, which acts as the Proton donor/acceptor. N57 carries an N-linked (GlcNAc...) asparagine glycan. 3'-phosphoadenylyl sulfate contacts are provided by R116, S124, and R128. N-linked (GlcNAc...) asparagine glycosylation occurs at N136. The cysteines at positions 158 and 165 are disulfide-linked. 3'-phosphoadenylyl sulfate-binding positions include Y170 and 215 to 224; that span reads SASQVKNSIN.

It belongs to the protein sulfotransferase family.

The enzyme catalyses L-tyrosyl-[protein] + 3'-phosphoadenylyl sulfate = O-sulfo-L-tyrosine-[protein] + adenosine 3',5'-bisphosphate + H(+). Catalyzes the O-sulfation of tyrosine residues within acidic motifs of polypeptides, using 3'-phosphoadenylyl sulfate (PAPS) as cosubstrate. This chain is Putative protein-tyrosine sulfotransferase, found in Caenorhabditis briggsae.